Consider the following 241-residue polypeptide: Agamous-like MADS-box protein AP1 (241 aa).

The MADS-box domain maps to 1 to 61 (MGRGRVQLKR…GKLFEYSTDS (61 aa)). One can recognise a K-box domain in the interval 88 to 178 (QGNWSLEYSK…AKEIKEKEKT (91 aa)).

In terms of tissue distribution, expressed in tendrils and flowers.

It localises to the nucleus. In terms of biological role, probable transcription factor involved in flower development. The polypeptide is Agamous-like MADS-box protein AP1 (Vitis vinifera (Grape)).